A 103-amino-acid polypeptide reads, in one-letter code: Small ribosomal subunit protein uS10 (103 aa).

The protein belongs to the universal ribosomal protein uS10 family. In terms of assembly, part of the 30S ribosomal subunit.

In terms of biological role, involved in the binding of tRNA to the ribosomes. This Haemophilus ducreyi (strain 35000HP / ATCC 700724) protein is Small ribosomal subunit protein uS10.